A 291-amino-acid chain; its full sequence is Probable cell wall amidase LytH (291 aa).

The signal sequence occupies residues 1–40 (MKKIEAWLSKKGLKNKRTLIVVIAFVLFIIFLFLLLNSNS). The 65-residue stretch at 41–105 (EDSGNITITE…WIAGWHTNLD (65 aa)) folds into the SH3b domain. The disordered stretch occupies residues 118–140 (QGKTIVLDPGHGGSDQGASSNTK). The MurNAc-LAA domain maps to 122–286 (IVLDPGHGGS…LEQAIVDGLK (165 aa)).

The protein belongs to the N-acetylmuramoyl-L-alanine amidase 3 family.

It localises to the secreted. Its function is as follows. Probably involved in cell-wall metabolism. The protein is Probable cell wall amidase LytH (lytH) of Staphylococcus aureus (strain USA300).